A 197-amino-acid chain; its full sequence is Imidazoleglycerol-phosphate dehydratase (197 aa).

It belongs to the imidazoleglycerol-phosphate dehydratase family.

It localises to the cytoplasm. It carries out the reaction D-erythro-1-(imidazol-4-yl)glycerol 3-phosphate = 3-(imidazol-4-yl)-2-oxopropyl phosphate + H2O. It participates in amino-acid biosynthesis; L-histidine biosynthesis; L-histidine from 5-phospho-alpha-D-ribose 1-diphosphate: step 6/9. In Bradyrhizobium sp. (strain ORS 278), this protein is Imidazoleglycerol-phosphate dehydratase.